The sequence spans 254 residues: Fructose-1,6-bisphosphatase (254 aa).

Mg(2+) is bound by residues glutamate 68, aspartate 84, leucine 86, and aspartate 87. Substrate is bound by residues 87–89 (DGS), arginine 171, isoleucine 176, and arginine 195. Aspartate 202 is a binding site for Mg(2+).

Belongs to the inositol monophosphatase superfamily. FBPase class 4 family. In terms of assembly, homodimer. Mg(2+) serves as cofactor.

It catalyses the reaction beta-D-fructose 1,6-bisphosphate + H2O = beta-D-fructose 6-phosphate + phosphate. Its activity is regulated as follows. Inhibited by Li(+), ADP, ATP and glucose-6-phosphate. Functionally, catalyzes the conversion of D-fructose 1,6-bisphosphate to D-fructose 6-phosphate. In vitro, also has weak activity with inositol-1-phosphate, glucose-1-phosphate and glycerol-2-phosphate. This Pyrococcus furiosus (strain ATCC 43587 / DSM 3638 / JCM 8422 / Vc1) protein is Fructose-1,6-bisphosphatase.